Consider the following 118-residue polypeptide: UPF0102 protein lpp3065 (118 aa).

It belongs to the UPF0102 family.

In Legionella pneumophila (strain Paris), this protein is UPF0102 protein lpp3065.